We begin with the raw amino-acid sequence, 335 residues long: Glutamyl-tRNA reductase (335 aa).

Substrate is bound by residues 60 to 63 (TCHR), serine 110, 115 to 117 (ETE), and glutamine 121. The Nucleophile role is filled by cysteine 61. 189 to 194 (GYSEIN) serves as a coordination point for NADP(+).

Belongs to the glutamyl-tRNA reductase family. In terms of assembly, homodimer.

The enzyme catalyses (S)-4-amino-5-oxopentanoate + tRNA(Glu) + NADP(+) = L-glutamyl-tRNA(Glu) + NADPH + H(+). It functions in the pathway porphyrin-containing compound metabolism; protoporphyrin-IX biosynthesis; 5-aminolevulinate from L-glutamyl-tRNA(Glu): step 1/2. Its function is as follows. Catalyzes the NADPH-dependent reduction of glutamyl-tRNA(Glu) to glutamate 1-semialdehyde (GSA). In Chlamydia trachomatis serovar D (strain ATCC VR-885 / DSM 19411 / UW-3/Cx), this protein is Glutamyl-tRNA reductase.